Here is a 103-residue protein sequence, read N- to C-terminus: MGKLTLLLLAILVWLQYSLWFGKNGIHDYTRVNDDVAALQATNAKLKARNDQLFAEIDDLNGGQEALEERARNELSMTRPGETFYRLVPDASKRAQSAGQNNR.

Residues 1-3 lie on the Cytoplasmic side of the membrane; the sequence is MGK. Residues 4-21 form a helical membrane-spanning segment; it reads LTLLLLAILVWLQYSLWF. Residues 22–103 are Periplasmic-facing; the sequence is GKNGIHDYTR…RAQSAGQNNR (82 aa). Residues 28–71 are a coiled coil; it reads DYTRVNDDVAALQATNAKLKARNDQLFAEIDDLNGGQEALEERA.

It belongs to the FtsB family. As to quaternary structure, part of a complex composed of FtsB, FtsL and FtsQ.

Its subcellular location is the cell inner membrane. Its function is as follows. Essential cell division protein. May link together the upstream cell division proteins, which are predominantly cytoplasmic, with the downstream cell division proteins, which are predominantly periplasmic. The chain is Cell division protein FtsB from Shigella flexneri serotype 5b (strain 8401).